Here is a 183-residue protein sequence, read N- to C-terminus: Ankyrin repeat domain-containing protein 39 (183 aa).

4 ANK repeats span residues 30 to 59 (DFER…DPSQ), 63 to 92 (AGYT…KCDA), 96 to 125 (GGAT…NPRV), and 129 to 158 (DGMT…ALKA). A Phosphoserine modification is found at S153.

It belongs to the ANKRD39 family.

This Homo sapiens (Human) protein is Ankyrin repeat domain-containing protein 39 (ANKRD39).